Consider the following 505-residue polypeptide: 2,3-bisphosphoglycerate-independent phosphoglycerate mutase (505 aa).

The Mn(2+) site is built by D12 and S62. The active-site Phosphoserine intermediate is the S62. Substrate is bound by residues H123, 153-154 (RD), R185, R191, 257-260 (RPDR), and K330. 5 residues coordinate Mn(2+): D397, H401, D438, H439, and H456.

Belongs to the BPG-independent phosphoglycerate mutase family. Monomer. Mn(2+) is required as a cofactor.

The enzyme catalyses (2R)-2-phosphoglycerate = (2R)-3-phosphoglycerate. The protein operates within carbohydrate degradation; glycolysis; pyruvate from D-glyceraldehyde 3-phosphate: step 3/5. Functionally, catalyzes the interconversion of 2-phosphoglycerate and 3-phosphoglycerate. This is 2,3-bisphosphoglycerate-independent phosphoglycerate mutase from Staphylococcus aureus (strain Mu50 / ATCC 700699).